Reading from the N-terminus, the 129-residue chain is Small ribosomal subunit protein uS11 (129 aa).

Belongs to the universal ribosomal protein uS11 family. As to quaternary structure, part of the 30S ribosomal subunit. Interacts with proteins S7 and S18. Binds to IF-3.

In terms of biological role, located on the platform of the 30S subunit, it bridges several disparate RNA helices of the 16S rRNA. Forms part of the Shine-Dalgarno cleft in the 70S ribosome. This Listeria innocua serovar 6a (strain ATCC BAA-680 / CLIP 11262) protein is Small ribosomal subunit protein uS11.